The following is a 274-amino-acid chain: MSLQAIIEAAFERRAEITPKTVDAETRAAIEEVIEGLDSGKYRVAEKIDGEWVTHQWLKKAVLLSFRINDNQIIDGAETKYYDKVALKFADYTEERFAQEGFRVVPSATVRKGAYISKNCVLMPSYVNIGAYVGEGTMVDTWATVGSCAQIGKNVHLSGGVGIGGVLEPLQANPTIIGDNCFIGARSEVVEGVIVEDGCVISMGVFIGQSTRIYDRETGEIHYGRVPAGSVVVSGSLPSKCGKYSLYCAVIVKKVDAKTLGKVGINELLRTIEE.

Arginine 103 and aspartate 140 together coordinate substrate.

Belongs to the transferase hexapeptide repeat family. Homotrimer.

The protein localises to the cytoplasm. The enzyme catalyses (S)-2,3,4,5-tetrahydrodipicolinate + succinyl-CoA + H2O = (S)-2-succinylamino-6-oxoheptanedioate + CoA. It functions in the pathway amino-acid biosynthesis; L-lysine biosynthesis via DAP pathway; LL-2,6-diaminopimelate from (S)-tetrahydrodipicolinate (succinylase route): step 1/3. This is 2,3,4,5-tetrahydropyridine-2,6-dicarboxylate N-succinyltransferase from Actinobacillus pleuropneumoniae serotype 5b (strain L20).